The primary structure comprises 138 residues: 18 kDa antigen 2 (138 aa).

Residues 21 to 131 (GTRRPAVMPM…KPRRIEINHN (111 aa)) enclose the sHSP domain.

It belongs to the small heat shock protein (HSP20) family.

In terms of biological role, not known. This protein is one of the major immune reactive proteins in mycobacteria. The sequence is that of 18 kDa antigen 2 from Mycobacterium avium.